The following is a 92-amino-acid chain: Small ribosomal subunit protein uS19 (92 aa).

Belongs to the universal ribosomal protein uS19 family.

In terms of biological role, protein S19 forms a complex with S13 that binds strongly to the 16S ribosomal RNA. The sequence is that of Small ribosomal subunit protein uS19 from Proteus mirabilis (strain HI4320).